The following is an 85-amino-acid chain: Large ribosomal subunit protein bL31B (85 aa).

It belongs to the bacterial ribosomal protein bL31 family. Type B subfamily. As to quaternary structure, part of the 50S ribosomal subunit.

The chain is Large ribosomal subunit protein bL31B from Clavibacter michiganensis subsp. michiganensis (strain NCPPB 382).